The chain runs to 645 residues: Synaptotagmin-16 (645 aa).

3 disordered regions span residues 102 to 121 (AQNSSPSLSQHAKDSCSTMS), 144 to 192 (EHHL…DSDE), and 206 to 344 (QSFR…PSGV). Over residues 167-177 (ETVNGKKQVNS) the composition is skewed to polar residues. The segment covering 179–192 (GDDEELSTSSDSDE) has biased composition (acidic residues). A compositionally biased stretch (polar residues) spans 287–303 (HQESSVVQSLRRQSTEG). Residues 350–469 (KCGDLDVIFE…HPEGEMKVTL (120 aa)) form the C2 1 domain. Positions 478–503 (SSGGSPLSPSAVSHSDSTSSTQSLSH) are disordered. The span at 485-502 (SPSAVSHSDSTSSTQSLS) shows a compositional bias: low complexity. Residues 505–640 (GAPELLVGLS…TKGQQICRWH (136 aa)) form the C2 2 domain.

The protein belongs to the synaptotagmin family. As to quaternary structure, homodimer. Can also form heterodimers. Expressed in brain.

May be involved in the trafficking and exocytosis of secretory vesicles in non-neuronal tissues. Is Ca(2+)-independent. The chain is Synaptotagmin-16 (SYT16) from Homo sapiens (Human).